The sequence spans 214 residues: MQEIIIQVMNQFGYFGVAFLIMIENIFPPIPSEVILTFGGFMTTYSELGIIGMIIAATIGSVLGALILYFVGRLLSVERLERLVSGRLGKVLRLKPEDITKAEKWFLKRGYATIFFCRFIPLIRSLISVPAGSAKMKLPSFLILTTLGTLIWNIVLVSLGAALGDNWEMIAGILDSYSSVVVAILGVIFILGLLLFVKKRFFPKNKNYSPDSEK.

4 consecutive transmembrane segments (helical) span residues 3 to 23, 48 to 68, 141 to 161, and 177 to 197; these read EIIIQVMNQFGYFGVAFLIMI, LGIIGMIIAATIGSVLGALIL, FLILTTLGTLIWNIVLVSLGA, and YSSVVVAILGVIFILGLLLFV.

Belongs to the DedA family.

The protein localises to the cell membrane. In Lactococcus lactis subsp. cremoris (strain MG1363), this protein is Alkaline phosphatase-like protein (apl).